The following is a 312-amino-acid chain: uncharacterized protein (312 aa).

Disordered regions lie at residues M1–A26 and G45–G106. The segment covering R8–N17 has biased composition (basic residues). Positions N68–R77 are enriched in basic and acidic residues. Over residues G85–L103 the composition is skewed to polar residues.

This is an uncharacterized protein from Schizosaccharomyces pombe (strain 972 / ATCC 24843) (Fission yeast).